The primary structure comprises 207 residues: Thymidylate kinase (207 aa).

9–16 (GGEGCGKS) is an ATP binding site.

It belongs to the thymidylate kinase family.

It carries out the reaction dTMP + ATP = dTDP + ADP. In terms of biological role, phosphorylation of dTMP to form dTDP in both de novo and salvage pathways of dTTP synthesis. The polypeptide is Thymidylate kinase (Dehalococcoides mccartyi (strain ATCC BAA-2266 / KCTC 15142 / 195) (Dehalococcoides ethenogenes (strain 195))).